The sequence spans 64 residues: Prokaryotic ubiquitin-like protein Pup (64 aa).

The tract at residues 1 to 37 is disordered; the sequence is MAQEQTKRGGGGGEDDDLTGSTAAGQERREKLTDETD. Residues 21 to 58 form an ARC ATPase binding region; that stretch reads STAAGQERREKLTDETDDLLDEIDDVLEENAEDFVRAY. A coiled-coil region spans residues 23–52; sequence AAGQERREKLTDETDDLLDEIDDVLEENAE. At Q64 the chain carries Deamidated glutamine. Q64 is covalently cross-linked (Isoglutamyl lysine isopeptide (Gln-Lys) (interchain with K-? in acceptor proteins)).

The protein belongs to the prokaryotic ubiquitin-like protein family. In terms of assembly, strongly interacts with the proteasome-associated ATPase ARC through a hydrophobic interface; the interacting region of Pup lies in its C-terminal half. There is one Pup binding site per ARC hexamer ring. Post-translationally, is modified by deamidation of its C-terminal glutamine to glutamate by the deamidase Dop, a prerequisite to the subsequent pupylation process.

It participates in protein degradation; proteasomal Pup-dependent pathway. Its function is as follows. Protein modifier that is covalently attached to lysine residues of substrate proteins, thereby targeting them for proteasomal degradation. The tagging system is termed pupylation. This Mycolicibacterium vanbaalenii (strain DSM 7251 / JCM 13017 / BCRC 16820 / KCTC 9966 / NRRL B-24157 / PYR-1) (Mycobacterium vanbaalenii) protein is Prokaryotic ubiquitin-like protein Pup.